We begin with the raw amino-acid sequence, 261 residues long: DNA repair protein RecO (261 aa).

It belongs to the RecO family.

Involved in DNA repair and RecF pathway recombination. This is DNA repair protein RecO from Chlorobium phaeobacteroides (strain BS1).